The chain runs to 211 residues: Peptide methionine sulfoxide reductase MsrA (211 aa).

Cysteine 52 is an active-site residue.

It belongs to the MsrA Met sulfoxide reductase family.

The catalysed reaction is L-methionyl-[protein] + [thioredoxin]-disulfide + H2O = L-methionyl-(S)-S-oxide-[protein] + [thioredoxin]-dithiol. It carries out the reaction [thioredoxin]-disulfide + L-methionine + H2O = L-methionine (S)-S-oxide + [thioredoxin]-dithiol. In terms of biological role, has an important function as a repair enzyme for proteins that have been inactivated by oxidation. Catalyzes the reversible oxidation-reduction of methionine sulfoxide in proteins to methionine. The chain is Peptide methionine sulfoxide reductase MsrA from Klebsiella pneumoniae (strain 342).